The following is a 128-amino-acid chain: 3-aminoacrylate deaminase RutC (128 aa).

This sequence belongs to the RutC family. Homotrimer.

The catalysed reaction is (Z)-3-aminoacrylate + H2O + H(+) = 3-oxopropanoate + NH4(+). Functionally, involved in pyrimidine catabolism. Catalyzes the deamination of 3-aminoacrylate to malonic semialdehyde, a reaction that can also occur spontaneously. RutC may facilitate the reaction and modulate the metabolic fitness, rather than catalyzing essential functions. The chain is 3-aminoacrylate deaminase RutC from Escherichia coli O111:H- (strain 11128 / EHEC).